Here is a 436-residue protein sequence, read N- to C-terminus: Enolase 1 (436 aa).

A Mg(2+)-binding site is contributed by Ser-40. Cys-147 and Cys-169 are joined by a disulfide. Residues Gln-164 and Glu-208 each coordinate (2R)-2-phosphoglycerate. The active-site Proton donor is Glu-208. Positions 243, 296, and 322 each coordinate Mg(2+). Position 322 (Asp-322) interacts with (2R)-2-phosphoglycerate. Residue Lys-347 is the Proton acceptor of the active site. (2R)-2-phosphoglycerate-binding residues include Arg-376 and Ser-377.

Belongs to the enolase family. Homodimer. Homotetramer. Interacts with methyltransferase METH; the interaction inhibits METH catalytic activity; 2-phosphoglycerate binding to ENO prevents the interaction with METH. It depends on Mg(2+) as a cofactor.

Its subcellular location is the cytoplasm. The protein resides in the nucleus. It catalyses the reaction (2R)-2-phosphoglycerate = phosphoenolpyruvate + H2O. It participates in carbohydrate degradation; glycolysis; pyruvate from D-glyceraldehyde 3-phosphate: step 4/5. In terms of biological role, glycolytic enzyme that catalyzes the conversion of 2-phosphoglycerate to phosphoenolpyruvate. Inhibits tRNA methyltransferase METH catalytic activity in the absence of 2-phosphoglycerate. The polypeptide is Enolase 1 (Entamoeba histolytica (strain ATCC 30459 / HM-1:IMSS / ABRM)).